The sequence spans 518 residues: Centromere protein T (518 aa).

The segment at 1–70 is disordered; sequence MADLSSPDGD…RKHSHGTGSV (70 aa). The span at 19-28 shows a compositional bias: basic and acidic residues; the sequence is HVLDTADSHT. The segment covering 34–57 has biased composition (polar residues); the sequence is STQTNPQRRRSQTPYSKRQGSQRK. Phosphothreonine is present on Thr-86. Positions 94–381 are flexible stalk domain; that stretch reads ILLTAPESST…EPHQLFEPPP (288 aa). 3 disordered regions span residues 102 to 156, 271 to 362, and 375 to 412; these read STVM…KRKQ, VHHS…ELSS, and QLFEPPPSPGVAAVSSESVPAKLPSRTRTAQPRHHQDP. Over residues 294–306 the composition is skewed to polar residues; the sequence is TPSTGTRPQSQMS. Phosphoserine occurs at positions 313, 324, 333, 345, 346, 357, and 382. Basic and acidic residues predominate over residues 326-343; it reads ELREAVGSKEAEEPKDLE. Residues 384–395 show a composition bias toward low complexity; sequence GVAAVSSESVPA.

The protein belongs to the CENP-T/CNN1 family. Component of the CENPA-CAD complex, composed of CENPI, CENPK, CENPL, CENPO, CENPP, CENPQ, CENPR and CENPS. The CENPA-CAD complex is probably recruited on centromeres by the CENPA-NAC complex, at least composed of CENPA, CENPC, CENPH, CENPM, CENPN, CENPT and CENPU. Identified in a centromeric complex containing histones H2A, H2B, H3 and H4, and at least CENPA, CENPB, CENPC, CENPT, CENPN, HJURP, SUPT16H, SSRP1 and RSF1. Interacts (via N-terminus) with the NDC80 complex. Heterodimer with CENPW; this dimer coassembles with CENPS-CENPX heterodimers at centromeres to form the tetrameric CENP-T-W-S-X complex. Dynamically phosphorylated during the cell cycle. Phosphorylated during G2 phase, metaphase and anaphase, but not during telophase or G1 phase.

Its subcellular location is the nucleus. The protein localises to the chromosome. It is found in the centromere. The protein resides in the kinetochore. Its function is as follows. Component of the CENPA-NAC (nucleosome-associated) complex, a complex that plays a central role in assembly of kinetochore proteins, mitotic progression and chromosome segregation. The CENPA-NAC complex recruits the CENPA-CAD (nucleosome distal) complex and may be involved in incorporation of newly synthesized CENPA into centromeres. Part of a nucleosome-associated complex that binds specifically to histone H3-containing nucleosomes at the centromere, as opposed to nucleosomes containing CENPA. Component of the heterotetrameric CENP-T-W-S-X complex that binds and supercoils DNA, and plays an important role in kinetochore assembly. CENPT has a fundamental role in kinetochore assembly and function. It is one of the inner kinetochore proteins, with most further proteins binding downstream. Required for normal chromosome organization and normal progress through mitosis. This is Centromere protein T (Cenpt) from Rattus norvegicus (Rat).